We begin with the raw amino-acid sequence, 108 residues long: uncharacterized protein (108 aa).

Residues 72–94 (LGLHTSVFFFLRIVCMSSAASVF) traverse the membrane as a helical segment.

Its subcellular location is the membrane. This is an uncharacterized protein from Saccharomyces cerevisiae (strain ATCC 204508 / S288c) (Baker's yeast).